The following is a 298-amino-acid chain: Ribosomal RNA small subunit methyltransferase H (298 aa).

S-adenosyl-L-methionine contacts are provided by residues 31-33 (GGH), D50, Y80, D95, and Q102. The interval 255 to 298 (AEKDLYGNTNKPFKSVGKAIDPDDEEKERNNRARSARLRIAERE) is disordered.

Belongs to the methyltransferase superfamily. RsmH family.

Its subcellular location is the cytoplasm. It catalyses the reaction cytidine(1402) in 16S rRNA + S-adenosyl-L-methionine = N(4)-methylcytidine(1402) in 16S rRNA + S-adenosyl-L-homocysteine + H(+). Its function is as follows. Specifically methylates the N4 position of cytidine in position 1402 (C1402) of 16S rRNA. The protein is Ribosomal RNA small subunit methyltransferase H of Cytophaga hutchinsonii (strain ATCC 33406 / DSM 1761 / CIP 103989 / NBRC 15051 / NCIMB 9469 / D465).